A 236-amino-acid chain; its full sequence is 2-C-methyl-D-erythritol 4-phosphate cytidylyltransferase (236 aa).

Belongs to the IspD/TarI cytidylyltransferase family. IspD subfamily. In terms of assembly, homodimer.

It catalyses the reaction 2-C-methyl-D-erythritol 4-phosphate + CTP + H(+) = 4-CDP-2-C-methyl-D-erythritol + diphosphate. The protein operates within isoprenoid biosynthesis; isopentenyl diphosphate biosynthesis via DXP pathway; isopentenyl diphosphate from 1-deoxy-D-xylulose 5-phosphate: step 2/6. In terms of biological role, catalyzes the formation of 4-diphosphocytidyl-2-C-methyl-D-erythritol from CTP and 2-C-methyl-D-erythritol 4-phosphate (MEP). In Salmonella paratyphi A (strain ATCC 9150 / SARB42), this protein is 2-C-methyl-D-erythritol 4-phosphate cytidylyltransferase.